Consider the following 207-residue polypeptide: MLNKLSRLLDEAGISLTDHQKNHLVAYVGMLDKWNKAYNLTSVRDPAEMIVRHILDSIVVAPYLQGQRFIDVGTGPGLPGIPLAIVLPDAHFTLLDSLGKRVRFLRQVQHELKLENITPVQSRVEAYPSEPPFDGVISRAFASLSDMVSWCRHLPGDKGRFYALKGQLPEDEIASLPNNFSVESVEKLRVPQLEGERHLVIIKSNKV.

S-adenosyl-L-methionine is bound by residues glycine 73, leucine 78, 124–125 (VE), and arginine 139.

This sequence belongs to the methyltransferase superfamily. RNA methyltransferase RsmG family.

The protein resides in the cytoplasm. It catalyses the reaction guanosine(527) in 16S rRNA + S-adenosyl-L-methionine = N(7)-methylguanosine(527) in 16S rRNA + S-adenosyl-L-homocysteine. In terms of biological role, specifically methylates the N7 position of guanine in position 527 of 16S rRNA. In Salmonella arizonae (strain ATCC BAA-731 / CDC346-86 / RSK2980), this protein is Ribosomal RNA small subunit methyltransferase G.